The primary structure comprises 1145 residues: DNA polymerase II large subunit (1145 aa).

Residues 284–303 (KSSSESDEDEETDGKPKIKP) are disordered.

Belongs to the archaeal DNA polymerase II family. Heterodimer of a large subunit and a small subunit.

It carries out the reaction DNA(n) + a 2'-deoxyribonucleoside 5'-triphosphate = DNA(n+1) + diphosphate. It catalyses the reaction Exonucleolytic cleavage in the 3'- to 5'-direction to yield nucleoside 5'-phosphates.. Its function is as follows. Possesses two activities: a DNA synthesis (polymerase) and an exonucleolytic activity that degrades single-stranded DNA in the 3'- to 5'-direction. Has a template-primer preference which is characteristic of a replicative DNA polymerase. The sequence is that of DNA polymerase II large subunit from Methanococcoides burtonii (strain DSM 6242 / NBRC 107633 / OCM 468 / ACE-M).